A 1106-amino-acid polypeptide reads, in one-letter code: Probable NAD-specific glutamate dehydrogenase (1106 aa).

Residue Lys654 is part of the active site.

Belongs to the Glu/Leu/Phe/Val dehydrogenases family. In terms of assembly, homotetramer.

Its subcellular location is the cytoplasm. The catalysed reaction is L-glutamate + NAD(+) + H2O = 2-oxoglutarate + NH4(+) + NADH + H(+). Its function is as follows. NAD(+)-dependent glutamate dehydrogenase which degrades glutamate to ammonia and alpha-ketoglutarate. The polypeptide is Probable NAD-specific glutamate dehydrogenase (gdh2) (Schizosaccharomyces pombe (strain 972 / ATCC 24843) (Fission yeast)).